Here is a 272-residue protein sequence, read N- to C-terminus: MIHWDQSRTLLSFPRVGLHLSWYGILFSLGIFLSSFSGIKLATALCKDREEKKELRTSLENFALGALLAIIIGARLAYVLFYGGSFYFENPSEIIKIWKGGLSSHGAVISVVIWAAVFSRLHIRKLPMLSVTYICDLCGAVFGCAALLIRVGNFMNQEILGTPTSMPWGVIFPNGGGQIPRHPVQLYEGLGYLVLSCILYRLCYRGVIRLGSGYSAAGALIGVAVIRFCAEFFKTHQGAWLGEENILTIGQWLSIPMIFLGVGIIWIASKKK.

4 helical membrane passes run 16–36, 62–82, 97–117, and 129–149; these read VGLHLSWYGILFSLGIFLSSF, FALGALLAIIIGARLAYVLFY, IWKGGLSSHGAVISVVIWAAV, and LSVTYICDLCGAVFGCAALLI. Residue arginine 150 coordinates a 1,2-diacyl-sn-glycero-3-phospho-(1'-sn-glycerol). 2 helical membrane passes run 206-226 and 246-266; these read GVIRLGSGYSAAGALIGVAVI and ILTIGQWLSIPMIFLGVGIIW.

This sequence belongs to the Lgt family.

Its subcellular location is the cell inner membrane. The enzyme catalyses L-cysteinyl-[prolipoprotein] + a 1,2-diacyl-sn-glycero-3-phospho-(1'-sn-glycerol) = an S-1,2-diacyl-sn-glyceryl-L-cysteinyl-[prolipoprotein] + sn-glycerol 1-phosphate + H(+). The protein operates within protein modification; lipoprotein biosynthesis (diacylglyceryl transfer). Catalyzes the transfer of the diacylglyceryl group from phosphatidylglycerol to the sulfhydryl group of the N-terminal cysteine of a prolipoprotein, the first step in the formation of mature lipoproteins. In Chlamydia trachomatis serovar D (strain ATCC VR-885 / DSM 19411 / UW-3/Cx), this protein is Phosphatidylglycerol--prolipoprotein diacylglyceryl transferase.